The chain runs to 96 residues: Citrate lyase acyl carrier protein (96 aa).

Ser-14 carries the O-(phosphoribosyl dephospho-coenzyme A)serine modification.

It belongs to the CitD family. As to quaternary structure, oligomer with a subunit composition of (alpha,beta,gamma)6.

It localises to the cytoplasm. Its function is as follows. Covalent carrier of the coenzyme of citrate lyase. In Lactococcus lactis subsp. lactis (strain IL1403) (Streptococcus lactis), this protein is Citrate lyase acyl carrier protein.